The following is a 1383-amino-acid chain: Spike glycoprotein (1383 aa).

The first 25 residues, 1 to 25 (MRSLIYFWLLLPVLPTLSLPQDVTR), serve as a signal peptide directing secretion. The interval 26–734 (CQSTTNFRRF…TRELPGFFYH (709 aa)) is S1. Over 26–1324 (CQSTTNFRRF…NRVETYIKWP (1299 aa)) the chain is Virion surface. Residues 617–745 (FQFTKGELIT…NDGSNCTEPV (129 aa)) are interaction with host ANPEP. The tract at residues 735–1383 (SNDGSNCTEP…YEAFEKVHVQ (649 aa)) is S2. The fusion peptide stretch occupies residues 955-975 (IGGMALGGITAAAALPFSYAV). Residues 969–1088 (LPFSYAVQAR…QVDRLITGRL (120 aa)) are heptad repeat 1 (HR1). Coiled coils occupy residues 1036–1080 (QEVV…DVQV) and 1272–1314 (TYLN…LEWL). Residues 1240–1336 (PDYIDVNKTL…VWLIIVIVLI (97 aa)) are heptad repeat 2 (HR2). A helical membrane pass occupies residues 1325 to 1344 (WWVWLIIVIVLIFVVSLLVF). Over 1345–1383 (CCISTGCCGCCGCCGACFSGCCRGPRLQPYEAFEKVHVQ) the chain is Intravirion. The KxHxx motif lies at 1379–1383 (KVHVQ).

The protein belongs to the alphacoronaviruses spike protein family. As to quaternary structure, homotrimer. During virus morphogenesis, found in a complex with M and HE proteins. Interacts with host ANPEP.

It localises to the virion membrane. The protein resides in the host endoplasmic reticulum-Golgi intermediate compartment membrane. Its function is as follows. S1 region attaches the virion to the cell membrane by interacting with host ANPEP/aminopeptidase N, initiating the infection. Binding to the receptor probably induces conformational changes in the S glycoprotein unmasking the fusion peptide of S2 region and activating membranes fusion. S2 region belongs to the class I viral fusion protein. Under the current model, the protein has at least 3 conformational states: pre-fusion native state, pre-hairpin intermediate state, and post-fusion hairpin state. During viral and target cell membrane fusion, the coiled coil regions (heptad repeats) regions assume a trimer-of-hairpins structure, positioning the fusion peptide in close proximity to the C-terminal region of the ectodomain. The formation of this structure appears to drive apposition and subsequent fusion of viral and target cell membranes. The protein is Spike glycoprotein of Porcine epidemic diarrhea virus (strain CV777) (PEDV).